The following is a 174-amino-acid chain: Adipose-secreted signaling protein (174 aa).

Position 2 is an N-acetylalanine (alanine 2). Position 147 is a phosphothreonine (threonine 147).

This sequence belongs to the ADISSP family.

The protein localises to the secreted. Its function is as follows. Adipocyte-secreted protein (adipokine) that acts as a key regulator for white adipose tissue (WAT) thermogenesis and glucose homeostasis at least in part through activation of protein kinase A (PKA). The sequence is that of Adipose-secreted signaling protein from Homo sapiens (Human).